Here is a 182-residue protein sequence, read N- to C-terminus: MAVTKAKKIEVTEKLTEDFKKANHAIVGTFNKLTVSKDYELRKAVRSVGGKYSVVKNTLAERAAKGTKIEDAVKGLAGVTSVAFTDGDPVQLAKVLSKYAKDNPEYEFKAGVVDGKVIKLADIDALANMPSKEELYSKLLFLISAPAQRLVTVMNATGRDLAVVLNQGVEKQKFSGGEAPAQ.

Belongs to the universal ribosomal protein uL10 family. As to quaternary structure, part of the ribosomal stalk of the 50S ribosomal subunit. The N-terminus interacts with L11 and the large rRNA to form the base of the stalk. The C-terminus forms an elongated spine to which L12 dimers bind in a sequential fashion forming a multimeric L10(L12)X complex.

Functionally, forms part of the ribosomal stalk, playing a central role in the interaction of the ribosome with GTP-bound translation factors. This is Large ribosomal subunit protein uL10 from Koribacter versatilis (strain Ellin345).